A 476-amino-acid polypeptide reads, in one-letter code: Glycogen synthase (476 aa).

K15 contacts ADP-alpha-D-glucose.

It belongs to the glycosyltransferase 1 family. Bacterial/plant glycogen synthase subfamily.

It catalyses the reaction [(1-&gt;4)-alpha-D-glucosyl](n) + ADP-alpha-D-glucose = [(1-&gt;4)-alpha-D-glucosyl](n+1) + ADP + H(+). The protein operates within glycan biosynthesis; glycogen biosynthesis. In terms of biological role, synthesizes alpha-1,4-glucan chains using ADP-glucose. This is Glycogen synthase from Streptococcus equi subsp. equi (strain 4047).